We begin with the raw amino-acid sequence, 399 residues long: Beta-1,4-galactosyltransferase 1 (399 aa).

Residues 1 to 24 (MRFREQFLGGSAAMPGATLQRACR) are Cytoplasmic-facing. The helical; Signal-anchor for type II membrane protein transmembrane segment at 25 to 44 (LLVAVCALHLGVTLVYYLSG) threads the bilayer. Residues 45-399 (RDLSRLPQLV…QITVDIGTPR (355 aa)) lie on the Lumenal side of the membrane. Residues 61–113 (QGGTNGAAASKQPPGEQRPRGARPPPPLGVSPKPRPGLDSSPGAASGPGLKSN) are disordered. Residues 82–95 (ARPPPPLGVSPKPR) are compositionally biased toward pro residues. Residue Asn113 is glycosylated (N-linked (GlcNAc...) asparagine). The cysteines at positions 131 and 173 are disulfide-linked. UDP-alpha-D-galactose-binding positions include 184-188 (PFRNR), 223-225 (FNR), 250-251 (VD), and Trp311. The cysteines at positions 244 and 263 are disulfide-linked. Mn(2+) is bound at residue Asp251. Residue 313 to 316 (GEDD) coordinates N-acetyl-D-glucosamine. His344 contributes to the Mn(2+) binding site. Residue 344 to 346 (HSR) participates in UDP-alpha-D-galactose binding. Residue Arg356 participates in N-acetyl-D-glucosamine binding.

It belongs to the glycosyltransferase 7 family. In terms of assembly, homodimer; and heterodimer with alpha-lactalbumin to form lactose synthase. Interacts (via N-terminal cytoplasmic domain) with UBE2Q1 (via N-terminus); the interaction is direct. The cofactor is Mn(2+). Post-translationally, the soluble form derives from the membrane forms by proteolytic processing.

Its subcellular location is the golgi apparatus. The protein localises to the golgi stack membrane. The protein resides in the cell membrane. It localises to the cell surface. It is found in the cell projection. Its subcellular location is the filopodium. The protein localises to the secreted. It catalyses the reaction D-glucose + UDP-alpha-D-galactose = lactose + UDP + H(+). The enzyme catalyses an N-acetyl-beta-D-glucosaminyl derivative + UDP-alpha-D-galactose = a beta-D-galactosyl-(1-&gt;4)-N-acetyl-beta-D-glucosaminyl derivative + UDP + H(+). It carries out the reaction N-acetyl-D-glucosamine + UDP-alpha-D-galactose = beta-D-galactosyl-(1-&gt;4)-N-acetyl-D-glucosamine + UDP + H(+). The catalysed reaction is a beta-D-GlcNAc-(1-&gt;3)-beta-D-Gal-(1-&gt;4)-beta-D-Glc-(1&lt;-&gt;1)-Cer(d18:1(4E)) + UDP-alpha-D-galactose = a neolactoside nLc4Cer(d18:1(4E)) + UDP + H(+). It catalyses the reaction a beta-D-glucosylceramide + UDP-alpha-D-galactose = a beta-D-galactosyl-(1-&gt;4)-beta-D-glucosyl-(1&lt;-&gt;1)-ceramide + UDP + H(+). The enzyme catalyses a neolactoside IV(3)-beta-GlcNAc-nLc4Cer + UDP-alpha-D-galactose = a neolactoside nLc6Cer + UDP + H(+). It functions in the pathway protein modification; protein glycosylation. Its function is as follows. The Golgi complex form catalyzes the production of lactose in the lactating mammary gland and could also be responsible for the synthesis of complex-type N-linked oligosaccharides in many glycoproteins as well as the carbohydrate moieties of glycolipids. Functionally, the cell surface form functions as a recognition molecule during a variety of cell to cell and cell to matrix interactions, as those occurring during development and egg fertilization, by binding to specific oligosaccharide ligands on opposing cells or in the extracellular matrix. The secreted form is responsible for the synthesis of complex-type to N-linked oligosaccharides in many glycoproteins as well as the carbohydrate moieties of glycolipids. The protein is Beta-1,4-galactosyltransferase 1 of Mus musculus (Mouse).